The primary structure comprises 211 residues: Protein-L-isoaspartate O-methyltransferase (211 aa).

Ser-62 is an active-site residue.

It belongs to the methyltransferase superfamily. L-isoaspartyl/D-aspartyl protein methyltransferase family.

The protein resides in the cytoplasm. The enzyme catalyses [protein]-L-isoaspartate + S-adenosyl-L-methionine = [protein]-L-isoaspartate alpha-methyl ester + S-adenosyl-L-homocysteine. Its function is as follows. Catalyzes the methyl esterification of L-isoaspartyl residues in peptides and proteins that result from spontaneous decomposition of normal L-aspartyl and L-asparaginyl residues. It plays a role in the repair and/or degradation of damaged proteins. This Shewanella woodyi (strain ATCC 51908 / MS32) protein is Protein-L-isoaspartate O-methyltransferase.